The primary structure comprises 112 residues: Lutropin subunit beta (112 aa).

6 disulfides stabilise this stretch: Cys4–Cys52, Cys18–Cys67, Cys21–Cys105, Cys29–Cys83, Cys33–Cys85, and Cys88–Cys95. Asn8 carries an N-linked (GlcNAc...) asparagine glycan.

This sequence belongs to the glycoprotein hormones subunit beta family. In terms of assembly, heterodimer of a common alpha chain and a unique beta chain which confers biological specificity to thyrotropin, lutropin, follitropin and gonadotropin.

It is found in the secreted. The protein is Lutropin subunit beta (lhb) of Aquarana catesbeiana (American bullfrog).